Here is a 116-residue protein sequence, read N- to C-terminus: uncharacterized protein (116 aa).

The interval 64-116 is disordered; sequence RRFYSGTVNRNARSAGAASRSTSSVKRPLESKKRNARPETEKWCASYSAGNRR. Residues 73–87 show a composition bias toward low complexity; the sequence is RNARSAGAASRSTSS. Positions 90–105 are enriched in basic and acidic residues; it reads RPLESKKRNARPETEK.

This is an uncharacterized protein from Saccharomyces cerevisiae (strain ATCC 204508 / S288c) (Baker's yeast).